We begin with the raw amino-acid sequence, 875 residues long: Peptidyl-glycine alpha-amidating monooxygenase B (875 aa).

A signal peptide spans 1-39; that stretch reads MDMASLISSLLVLFLIFQNSCYCFRSPLSVFKRYEESTR. Residues 3–394 are peptidylglycine alpha-hydroxylating monooxygenase; that stretch reads MASLISSLLV…KREEEEVLNQ (392 aa). The Intragranular segment spans residues 40-763; that stretch reads SLSNDCLGTT…PSVVQESSAG (724 aa). 5 disulfides stabilise this stretch: C45/C184, C79/C124, C112/C129, C225/C332, and C291/C313. 2 residues coordinate Cu(2+): H105 and H106. Positions 170, 240, 242, and 312 each coordinate Cu(2+). Residues 395-716 are peptidyl-alpha-hydroxyglycine alpha-amidating lyase; sequence DVHLEEDTDW…SPSKAEHRSV (322 aa). R430 is a binding site for a protein. N-linked (GlcNAc...) asparagine glycosylation is present at N465. 3 NHL repeats span residues 467–508, 516–561, and 569–613; these read SKVL…VGAE, LGRA…FSPN, and GEET…FHAK. 2 cysteine pairs are disulfide-bonded: C530–C551 and C598–C609. The a protein site is built by Y550 and R602. N662 is a glycosylation site (N-linked (GlcNAc...) asparagine). An NHL 4 repeat occupies 666 to 709; the sequence is GDILDTFIPARKNFEMPHDIAAGDDGTVYVGDAHANAVWKFSPS. The disordered stretch occupies residues 735–755; it reads HMRSRPKTNESVGQQTQEKPS. N743 carries N-linked (GlcNAc...) asparagine glycosylation. Over residues 743–755 the composition is skewed to polar residues; it reads NESVGQQTQEKPS. The chain crosses the membrane as a helical span at residues 764–787; the sequence is VSFVLIITLLIIPVVVLIAIAIFI. Over 788–875 the chain is Cytoplasmic; the sequence is RWRKVRMYGG…APPIPPVSSS (88 aa). Residues 837 to 875 form a disordered region; that stretch reads KGFDRLSTEGSDQEKDDDDDGSDSEEEYSAPPIPPVSSS. Over residues 850-864 the composition is skewed to acidic residues; it reads EKDDDDDGSDSEEEY.

It in the C-terminal section; belongs to the peptidyl-alpha-hydroxyglycine alpha-amidating lyase family. In the N-terminal section; belongs to the copper type II ascorbate-dependent monooxygenase family. As to quaternary structure, monomer. Zn(2+) is required as a cofactor. Cu(2+) serves as cofactor.

It is found in the cytoplasmic vesicle. It localises to the secretory vesicle membrane. The catalysed reaction is a [peptide]-C-terminal glycine + 2 L-ascorbate + O2 = a [peptide]-C-terminal (2S)-2-hydroxyglycine + 2 monodehydro-L-ascorbate radical + H2O. It carries out the reaction a [peptide]-C-terminal (2S)-2-hydroxyglycine = a [peptide]-C-terminal amide + glyoxylate. Bifunctional enzyme that catalyzes amidation of the C-terminus of proteins. Alpha-amidation is present at the C-terminus of many endocrine hormones and neuropeptides and is required for their activity. C-terminal amidation also takes place in response to protein fragmentation triggered by oxidative stress, promoting degradation of amidated protein fragments by the proteasome. Alpha-amidation involves two sequential reactions, both of which are catalyzed by separate catalytic domains of the enzyme. The first step, catalyzed by peptidyl alpha-hydroxylating monooxygenase (PHM) domain, is the copper-, ascorbate-, and O2- dependent stereospecific hydroxylation (with S stereochemistry) at the alpha-carbon (C-alpha) of the C-terminal glycine of the peptidylglycine substrate. The second step, catalyzed by the peptidylglycine amidoglycolate lyase (PAL) domain, is the zinc-dependent cleavage of the N-C-alpha bond, producing the alpha-amidated peptide and glyoxylate. In Xenopus laevis (African clawed frog), this protein is Peptidyl-glycine alpha-amidating monooxygenase B (pam-b).